The primary structure comprises 558 residues: Protein NRT1/ PTR FAMILY 2.7 (558 aa).

Helical transmembrane passes span phenylalanine 31–isoleucine 51, isoleucine 63–alanine 83, phenylalanine 90–leucine 110, leucine 140–alanine 162, phenylalanine 178–valine 198, isoleucine 204–phenylalanine 224, isoleucine 319–leucine 339, isoleucine 357–asparagine 377, valine 399–lysine 419, valine 440–glycine 460, serine 479–isoleucine 499, and valine 518–tryptophan 538.

The protein belongs to the major facilitator superfamily. Proton-dependent oligopeptide transporter (POT/PTR) (TC 2.A.17) family. As to expression, expressed in shoots and in the cortex of mature roots. Not expressed in root tip meristematic cells.

The protein resides in the cell membrane. Transporter involved in a passive nitrate efflux. Not competent for chloride transport. This is Protein NRT1/ PTR FAMILY 2.7 (NPF2.7) from Arabidopsis thaliana (Mouse-ear cress).